The primary structure comprises 280 residues: Urease accessory protein UreD 1 (280 aa).

This sequence belongs to the UreD family. In terms of assembly, ureD, UreF and UreG form a complex that acts as a GTP-hydrolysis-dependent molecular chaperone, activating the urease apoprotein by helping to assemble the nickel containing metallocenter of UreC. The UreE protein probably delivers the nickel.

The protein localises to the cytoplasm. Its function is as follows. Required for maturation of urease via the functional incorporation of the urease nickel metallocenter. This Brucella melitensis biotype 1 (strain ATCC 23456 / CCUG 17765 / NCTC 10094 / 16M) protein is Urease accessory protein UreD 1.